The following is a 149-amino-acid chain: MAAPVDPREVQSLQTYLNQYTQQAEVYSRQLGMMEEGIREANASIETLKALAEAGEAPVFMPIGGGLNIRATIIQPDEVFVSIGSDIIVQKTNEGAISYLQDRIKEMEATAKNLTEVLQKIDAQVKDIQKRLEQLYRQAQAEQQGAGSL.

This sequence belongs to the prefoldin subunit alpha family. In terms of assembly, heterohexamer of two alpha and four beta subunits.

The protein localises to the cytoplasm. Its function is as follows. Molecular chaperone capable of stabilizing a range of proteins. Seems to fulfill an ATP-independent, HSP70-like function in archaeal de novo protein folding. The sequence is that of Prefoldin subunit alpha from Methanospirillum hungatei JF-1 (strain ATCC 27890 / DSM 864 / NBRC 100397 / JF-1).